Consider the following 185-residue polypeptide: Adenine phosphoribosyltransferase (185 aa).

This sequence belongs to the purine/pyrimidine phosphoribosyltransferase family. In terms of assembly, homodimer.

Its subcellular location is the cytoplasm. It carries out the reaction AMP + diphosphate = 5-phospho-alpha-D-ribose 1-diphosphate + adenine. The protein operates within purine metabolism; AMP biosynthesis via salvage pathway; AMP from adenine: step 1/1. Catalyzes a salvage reaction resulting in the formation of AMP, that is energically less costly than de novo synthesis. The sequence is that of Adenine phosphoribosyltransferase from Shewanella denitrificans (strain OS217 / ATCC BAA-1090 / DSM 15013).